The following is a 731-amino-acid chain: ARS-binding factor 1 (731 aa).

Residue Lys18 forms a Glycyl lysine isopeptide (Lys-Gly) (interchain with G-Cter in ubiquitin) linkage. Low complexity-rich tracts occupy residues 84 to 99 (ASSE…NTNP) and 111 to 129 (NNMN…NKVS). Disordered regions lie at residues 84 to 132 (ASSE…SNDS), 146 to 227 (ANTH…DDVH), 251 to 308 (VANV…PSSI), and 439 to 463 (YNDL…GTNL). Residues 149–161 (HPDDTNDKVESRS) are compositionally biased toward basic and acidic residues. Positions 177–186 (IFKQQGVTIK) are enriched in polar residues. Thr189 bears the Phosphothreonine mark. Position 193 is a phosphoserine (Ser193). Low complexity-rich tracts occupy residues 270 to 308 (TNNN…PSSI) and 445 to 454 (SSSSNNNNNN). Ser467 carries the post-translational modification Phosphoserine. The tract at residues 475-539 (EISSAGTSSN…PSVNKWSKPD (65 aa)) is disordered. Positions 481–510 (TSSNTTKNVNNNKNDSNDDNNGNNNNDASN) are enriched in low complexity. Phosphoserine is present on residues Ser554 and Ser618. Disordered regions lie at residues 590–643 (RSID…DDKL) and 687–731 (KNTT…LRGQ). At Ser624 the chain carries Phosphoserine; by PKC. C-terminal sequence stretches follow at residues 624-628 (SKRQH) and 639-662 (EDDK…KEVE). Positions 634–643 (LEERNEDDKL) are enriched in basic and acidic residues. The span at 689–698 (TTHHNNHHSQ) shows a compositional bias: basic residues. Ser720 is subject to Phosphoserine; by CK2.

It belongs to the BAF1 family. As to quaternary structure, component of the global genome repair (GGR) complex composed of at least ABF1, RAD7 and RAD16. Interacts with PSE1. In terms of processing, extensively phosphorylated on Ser and Thr residues.

Its subcellular location is the nucleus. General regulatory factor (GRF) that contributes to transcriptional activation of a large number of genes, as well as to DNA replication, silencing and telomere structure. Involved in the transcription activation of a subset of ribosomal protein genes. Binds the ARS-elements found in many promoters. Binds to the sequence 5'-TCN(7)ACG-3'. Influences on genome-wide nucleosome occupancy and affects chromatin structure, and probably dynamics. As a component of the global genome repair (GGR) complex, promotes global genome nucleotide excision repair (GG-NER) which removes DNA damage from nontranscribing DNA. Component of the regulatory network controlling mitotic and meiotic cell cycle progression. This chain is ARS-binding factor 1 (ABF1), found in Saccharomyces cerevisiae (strain ATCC 204508 / S288c) (Baker's yeast).